The primary structure comprises 669 residues: DNA ligase (669 aa).

NAD(+) contacts are provided by residues 31 to 35 (DSVYD), 80 to 81 (SL), and Glu-112. The N6-AMP-lysine intermediate role is filled by Lys-114. Residues Arg-135, Glu-172, Lys-289, and Lys-313 each coordinate NAD(+). Positions 407, 410, 425, and 430 each coordinate Zn(2+). A BRCT domain is found at 591-669 (TDSGKLKGKT…EAEFLQLLEP (79 aa)).

This sequence belongs to the NAD-dependent DNA ligase family. LigA subfamily. Requires Mg(2+) as cofactor. Mn(2+) serves as cofactor.

The enzyme catalyses NAD(+) + (deoxyribonucleotide)n-3'-hydroxyl + 5'-phospho-(deoxyribonucleotide)m = (deoxyribonucleotide)n+m + AMP + beta-nicotinamide D-nucleotide.. Functionally, DNA ligase that catalyzes the formation of phosphodiester linkages between 5'-phosphoryl and 3'-hydroxyl groups in double-stranded DNA using NAD as a coenzyme and as the energy source for the reaction. It is essential for DNA replication and repair of damaged DNA. The chain is DNA ligase from Synechocystis sp. (strain ATCC 27184 / PCC 6803 / Kazusa).